We begin with the raw amino-acid sequence, 314 residues long: ATP synthase gamma chain (314 aa).

This sequence belongs to the ATPase gamma chain family. F-type ATPases have 2 components, CF(1) - the catalytic core - and CF(0) - the membrane proton channel. CF(1) has five subunits: alpha(3), beta(3), gamma(1), delta(1), epsilon(1). CF(0) has three main subunits: a, b and c.

It is found in the cellular thylakoid membrane. In terms of biological role, produces ATP from ADP in the presence of a proton gradient across the membrane. The gamma chain is believed to be important in regulating ATPase activity and the flow of protons through the CF(0) complex. The chain is ATP synthase gamma chain from Synechococcus sp. (strain JA-3-3Ab) (Cyanobacteria bacterium Yellowstone A-Prime).